We begin with the raw amino-acid sequence, 98 residues long: Acylphosphatase (98 aa).

One can recognise an Acylphosphatase-like domain in the interval 12-98 (TYYVRVRGVV…ERRFDRFQQQ (87 aa)). Catalysis depends on residues R27 and N45.

The protein belongs to the acylphosphatase family.

It carries out the reaction an acyl phosphate + H2O = a carboxylate + phosphate + H(+). The chain is Acylphosphatase (acyP) from Burkholderia ambifaria (strain ATCC BAA-244 / DSM 16087 / CCUG 44356 / LMG 19182 / AMMD) (Burkholderia cepacia (strain AMMD)).